Here is a 170-residue protein sequence, read N- to C-terminus: UPF0316 protein CLJ_B0679 (170 aa).

Transmembrane regions (helical) follow at residues 1-21 and 36-56; these read MLSYYAFIFFAKIMEVALMTI and IIGFIEVTIWLYVTSSVLSGI.

This sequence belongs to the UPF0316 family.

The protein resides in the cell membrane. In Clostridium botulinum (strain 657 / Type Ba4), this protein is UPF0316 protein CLJ_B0679.